The following is a 43-amino-acid chain: Protein PsbN (43 aa).

The chain crosses the membrane as a helical span at residues 4-24 (ATIIVIFVSSLLLGITAYSIY).

Belongs to the PsbN family.

The protein resides in the plastid. Its subcellular location is the chloroplast thylakoid membrane. Its function is as follows. May play a role in photosystem I and II biogenesis. In Trieres chinensis (Marine centric diatom), this protein is Protein PsbN.